We begin with the raw amino-acid sequence, 240 residues long: MNKNVVIKSLAALTILTSVTGIGTTLVEEVQQTAKAENNVTKVKDTNIFPYTGVVAFKSATGFVVGKNTILTNKHVSKNYKVGDRITAHPNSDKGNGGIYSIKKIINYPGKEDVSVIQVEERAIERGPKGFNFNDNVTPFKYAAGAKAGERIKVIGYPHPYKNKYVLYESTGPVMSVEGSSIVYSAHTESGNSGSPVLNSNNELVGIHFASDVKNDDNRNAYGVYFTPEIKKFIAENIDK.

The first 36 residues, 1-36 (MNKNVVIKSLAALTILTSVTGIGTTLVEEVQQTAKA), serve as a signal peptide directing secretion. Residues histidine 75, aspartate 113, and serine 193 each act as charge relay system in the active site.

The protein belongs to the peptidase S1B family.

It localises to the secreted. Serine protease that cleaves specifically after the sequence Trp-Glu-Leu-Gln. The polypeptide is Serine protease SplB (splB) (Staphylococcus aureus (strain USA300)).